A 318-amino-acid chain; its full sequence is Death effector domain-containing protein (318 aa).

Positions 25 to 103 constitute a DED domain; sequence SLHRMFDIVG…RHDLLPYVTL (79 aa). Disordered stretches follow at residues 128–147 and 160–191; these read PRAL…TVPP and QMCS…KEKQ.

In terms of assembly, interacts with CASP8, CASP10, KRT8, KRT18, CASP3 and FADD. Homodimerizes and heterodimerizes with DEDD2. Post-translationally, exists predominantly in a mono- or diubiquitinated form. Widely expressed with highest levels in testis.

Its subcellular location is the cytoplasm. The protein localises to the nucleus. It localises to the nucleolus. Its function is as follows. A scaffold protein that directs CASP3 to certain substrates and facilitates their ordered degradation during apoptosis. May also play a role in mediating CASP3 cleavage of KRT18. Regulates degradation of intermediate filaments during apoptosis. May play a role in the general transcription machinery in the nucleus and might be an important regulator of the activity of GTF3C3. Inhibits DNA transcription in vitro. This is Death effector domain-containing protein (DEDD) from Homo sapiens (Human).